The sequence spans 496 residues: Probable CtpA-like serine protease (496 aa).

Residues 1–16 (MDDKQHTSSSDDERAE) show a composition bias toward basic and acidic residues. The segment at 1–27 (MDDKQHTSSSDDERAEIATSNQDQETN) is disordered. The segment covering 18 to 27 (ATSNQDQETN) has biased composition (polar residues). Residues 39 to 59 (FISILIGTTLITAVITVVAYI) traverse the membrane as a helical segment. Residues 124 to 206 (TKSFNEGVSG…TEVTLTVQRG (83 aa)) enclose the PDZ domain. Residues S329, D340, and K354 each act as charge relay system in the active site.

The protein belongs to the peptidase S41A family.

It is found in the cell membrane. The protein is Probable CtpA-like serine protease of Staphylococcus aureus (strain Mu50 / ATCC 700699).